We begin with the raw amino-acid sequence, 272 residues long: Large ribosomal subunit protein uL2 (272 aa).

Residues 222 to 272 (GVAMNPIDHPLGGGEGKSSGGRAACTPWGKPEGVKTRKNKRTDKFIIKRRK) form a disordered region. Positions 263–272 (TDKFIIKRRK) are enriched in basic and acidic residues.

The protein belongs to the universal ribosomal protein uL2 family. As to quaternary structure, part of the 50S ribosomal subunit. Forms a bridge to the 30S subunit in the 70S ribosome.

In terms of biological role, one of the primary rRNA binding proteins. Required for association of the 30S and 50S subunits to form the 70S ribosome, for tRNA binding and peptide bond formation. It has been suggested to have peptidyltransferase activity; this is somewhat controversial. Makes several contacts with the 16S rRNA in the 70S ribosome. This Thermodesulfovibrio yellowstonii (strain ATCC 51303 / DSM 11347 / YP87) protein is Large ribosomal subunit protein uL2.